Consider the following 315-residue polypeptide: Acetyl-coenzyme A carboxylase carboxyl transferase subunit alpha (315 aa).

Positions 32-289 constitute a CoA carboxyltransferase C-terminal domain; sequence EIDMLEASLE…KEAFTKQLSE (258 aa).

The protein belongs to the AccA family. In terms of assembly, acetyl-CoA carboxylase is a heterohexamer composed of biotin carboxyl carrier protein (AccB), biotin carboxylase (AccC) and two subunits each of ACCase subunit alpha (AccA) and ACCase subunit beta (AccD).

The protein resides in the cytoplasm. The catalysed reaction is N(6)-carboxybiotinyl-L-lysyl-[protein] + acetyl-CoA = N(6)-biotinyl-L-lysyl-[protein] + malonyl-CoA. The protein operates within lipid metabolism; malonyl-CoA biosynthesis; malonyl-CoA from acetyl-CoA: step 1/1. Its function is as follows. Component of the acetyl coenzyme A carboxylase (ACC) complex. First, biotin carboxylase catalyzes the carboxylation of biotin on its carrier protein (BCCP) and then the CO(2) group is transferred by the carboxyltransferase to acetyl-CoA to form malonyl-CoA. The sequence is that of Acetyl-coenzyme A carboxylase carboxyl transferase subunit alpha from Staphylococcus carnosus (strain TM300).